We begin with the raw amino-acid sequence, 346 residues long: Phosphate acyltransferase (346 aa).

It belongs to the PlsX family. Homodimer. Probably interacts with PlsY.

The protein localises to the cytoplasm. It carries out the reaction a fatty acyl-[ACP] + phosphate = an acyl phosphate + holo-[ACP]. It participates in lipid metabolism; phospholipid metabolism. Catalyzes the reversible formation of acyl-phosphate (acyl-PO(4)) from acyl-[acyl-carrier-protein] (acyl-ACP). This enzyme utilizes acyl-ACP as fatty acyl donor, but not acyl-CoA. This chain is Phosphate acyltransferase, found in Psychromonas ingrahamii (strain DSM 17664 / CCUG 51855 / 37).